The sequence spans 883 residues: Puromycin-sensitive aminopeptidase (883 aa).

Residues Glu-125 and 265-269 each bind substrate; that span reads GAMEN. His-301 is a binding site for Zn(2+). Glu-302 functions as the Proton acceptor in the catalytic mechanism. 2 residues coordinate Zn(2+): His-305 and Glu-324.

The protein belongs to the peptidase M1 family. The cofactor is Zn(2+).

It carries out the reaction Release of an N-terminal amino acid, preferentially alanine, from a wide range of peptides, amides and arylamides.. With respect to regulation, strongly inhibited by puromycin and DAMPAQ-22. Functionally, aminopeptidase with broad substrate specificity for several peptides. Involved in proteolytic events essential for cell growth and viability. Plays an essential role during prophase I of meiosis. Required for correct meiotic reconbination in both male and female gametophytes. The sequence is that of Puromycin-sensitive aminopeptidase (MPA1) from Arabidopsis thaliana (Mouse-ear cress).